A 224-amino-acid polypeptide reads, in one-letter code: UPF0758 protein PSPA7_6095 (224 aa).

The 123-residue stretch at 102–224 (VLESPQAVRD…PLSLAEYGWM (123 aa)) folds into the MPN domain. The Zn(2+) site is built by histidine 173, histidine 175, and aspartate 186. A JAMM motif motif is present at residues 173–186 (HNHPSGDARPSLAD).

It belongs to the UPF0758 family.

This is UPF0758 protein PSPA7_6095 from Pseudomonas paraeruginosa (strain DSM 24068 / PA7) (Pseudomonas aeruginosa (strain PA7)).